The primary structure comprises 163 residues: Small ribosomal subunit protein uS9 (163 aa).

Residues 1-25 (MAENTNNSAVTETEETTAAFTTETN) are compositionally biased toward low complexity. The tract at residues 1–40 (MAENTNNSAVTETEETTAAFTTETNSGAGTGTSTIAPGYG) is disordered.

Belongs to the universal ribosomal protein uS9 family.

This Bifidobacterium animalis subsp. lactis (strain AD011) protein is Small ribosomal subunit protein uS9.